Reading from the N-terminus, the 227-residue chain is Phosphoribosylformylglycinamidine synthase subunit PurQ (227 aa).

Positions 3–225 (FAVIVLPGSN…VKNWRETHVA (223 aa)) constitute a Glutamine amidotransferase type-1 domain. Catalysis depends on Cys-86, which acts as the Nucleophile. Active-site residues include His-194 and Glu-196.

Part of the FGAM synthase complex composed of 1 PurL, 1 PurQ and 2 PurS subunits.

It localises to the cytoplasm. It catalyses the reaction N(2)-formyl-N(1)-(5-phospho-beta-D-ribosyl)glycinamide + L-glutamine + ATP + H2O = 2-formamido-N(1)-(5-O-phospho-beta-D-ribosyl)acetamidine + L-glutamate + ADP + phosphate + H(+). It carries out the reaction L-glutamine + H2O = L-glutamate + NH4(+). Its pathway is purine metabolism; IMP biosynthesis via de novo pathway; 5-amino-1-(5-phospho-D-ribosyl)imidazole from N(2)-formyl-N(1)-(5-phospho-D-ribosyl)glycinamide: step 1/2. Functionally, part of the phosphoribosylformylglycinamidine synthase complex involved in the purines biosynthetic pathway. Catalyzes the ATP-dependent conversion of formylglycinamide ribonucleotide (FGAR) and glutamine to yield formylglycinamidine ribonucleotide (FGAM) and glutamate. The FGAM synthase complex is composed of three subunits. PurQ produces an ammonia molecule by converting glutamine to glutamate. PurL transfers the ammonia molecule to FGAR to form FGAM in an ATP-dependent manner. PurS interacts with PurQ and PurL and is thought to assist in the transfer of the ammonia molecule from PurQ to PurL. The protein is Phosphoribosylformylglycinamidine synthase subunit PurQ of Bacillus licheniformis (strain ATCC 14580 / DSM 13 / JCM 2505 / CCUG 7422 / NBRC 12200 / NCIMB 9375 / NCTC 10341 / NRRL NRS-1264 / Gibson 46).